Consider the following 525-residue polypeptide: tRNA(Ile)-lysidine synthase (525 aa).

ATP is bound at residue 32 to 37 (SGGRDS).

This sequence belongs to the tRNA(Ile)-lysidine synthase family.

Its subcellular location is the cytoplasm. The enzyme catalyses cytidine(34) in tRNA(Ile2) + L-lysine + ATP = lysidine(34) in tRNA(Ile2) + AMP + diphosphate + H(+). Functionally, ligates lysine onto the cytidine present at position 34 of the AUA codon-specific tRNA(Ile) that contains the anticodon CAU, in an ATP-dependent manner. Cytidine is converted to lysidine, thus changing the amino acid specificity of the tRNA from methionine to isoleucine. The polypeptide is tRNA(Ile)-lysidine synthase (Psychrobacter sp. (strain PRwf-1)).